Consider the following 261-residue polypeptide: Prostate-specific antigen (261 aa).

Positions 1 to 17 (MWVPVVFLTLSVTWIGA) are cleaved as a signal peptide. Residues 18–24 (APLILSR) constitute a propeptide, activation peptide. The region spanning 25 to 258 (IVGGWECEKH…YRKWIKDTIV (234 aa)) is the Peptidase S1 domain. 5 disulfides stabilise this stretch: Cys31/Cys173, Cys50/Cys66, Cys152/Cys219, Cys184/Cys198, and Cys209/Cys234. The active-site Charge relay system is the His65. Asn69 carries N-linked (GlcNAc...) asparagine glycosylation. Asp120 acts as the Charge relay system in catalysis. The active-site Charge relay system is Ser213.

This sequence belongs to the peptidase S1 family. Kallikrein subfamily. As to quaternary structure, forms a heterodimer with SERPINA5.

Its subcellular location is the secreted. It carries out the reaction Preferential cleavage: -Tyr-|-Xaa-.. Its activity is regulated as follows. Inhibited by SERPINA5. Activity is strongly inhibited by Zn2+, 100 times more abundant in semen than in serum. This inhibition is relieved by exposure to semenogelins, which are avid zinc binders. In terms of biological role, hydrolyzes semenogelin-1 thus leading to the liquefaction of the seminal coagulum. The protein is Prostate-specific antigen (KLK3) of Homo sapiens (Human).